The sequence spans 412 residues: MNAEIIAVGTELLLGQIANTNAQFLSEKLASIGINVYYHTVVGDNNKRLQKAIEAAEERADILIFTGGLGPTKDDLTKETIATSLDEELVYDEKALALISNYFKRTGREFTENNKKQALVLNGATVFANDHGMAPGMGVNKNEKVYILLPGPPKEMKPMYVSYVEPFLRNFTTGENIYSRVLRFFGIGESQLEVKVQDLIDGQTNPTIAPLANDGEVTLRLTAKHQNVSEAEKLIQHVEDLILERVGEFFYGYDQEFLHYKAIELLKRKGLTLACAESLTGGLFGNQVTENAGVSSVFKGGVICYHNDVKQHVLRVPEEVLHTDGAVSKECARYLAENVKDVLKADIGISFTGVAGPDASEQKEPGTVFVGLSIKDEPTVVFPLNLSGSRQQIRERTAKYGFYHLYKKLEEI.

This sequence belongs to the CinA family.

This chain is Putative competence-damage inducible protein, found in Bacillus cereus (strain B4264).